Here is a 918-residue protein sequence, read N- to C-terminus: Interleukin-6 receptor subunit beta (918 aa).

Positions 1-22 (MLTLQTWLVQALFIFLTTESTG) are cleaved as a signal peptide. The Extracellular segment spans residues 23 to 619 (ELLDPCGYIS…TPKFAQGEIE (597 aa)). Residues 26–120 (DPCGYISPES…LEQNVYGITI (95 aa)) enclose the Ig-like C2-type domain. Cystine bridges form between Cys-28–Cys-54 and Cys-48–Cys-103. N-linked (GlcNAc...) asparagine glycans are attached at residues Asn-43, Asn-83, and Asn-131. 5 Fibronectin type-III domains span residues 125–216 (PPEK…NFDP), 224–324 (PPHN…TYED), 329–424 (APSF…FQAT), 426–517 (PVMD…LKQA), and 518–613 (PPSK…TPKF). Cysteines 134 and 144 form a disulfide. A glycan (N-linked (GlcNAc...) asparagine) is linked at Asn-157. A disulfide bridge links Cys-172 with Cys-182. An N-linked (GlcNAc...) asparagine glycan is attached at Asn-227. The WSXWS motif signature appears at 310-314 (WSDWS). Asn-379 and Asn-383 each carry an N-linked (GlcNAc...) asparagine glycan. N-linked (GlcNAc...) (complex) asparagine glycosylation occurs at Asn-390. A disulfide bridge connects residues Cys-458 and Cys-466. Asn-553 and Asn-564 each carry an N-linked (GlcNAc...) asparagine glycan. Residues 620–641 (AIVVPVCLAFLLTTLLGVLFCF) traverse the membrane as a helical segment. Topologically, residues 642–918 (NKRDLIKKHI…TVRQGGYMPQ (277 aa)) are cytoplasmic. Positions 651 to 659 (IWPNVPDPS) match the Box 1 motif motif. Disordered stretches follow at residues 660–681 (KSHI…SKDQ) and 722–758 (EGHS…STVQ). Phosphoserine is present on residues Ser-661 and Ser-667. Over residues 731–755 (SSCMSSSRPSISSSDENESSQNTSS) the composition is skewed to low complexity. Phosphoserine is present on residues Ser-782, Ser-789, Ser-829, and Ser-839.

The protein belongs to the type I cytokine receptor family. Type 2 subfamily. Component of a hexamer of two molecules each of IL6, IL6R and IL6ST; associates with the complex IL6:IL6R but does not interact with IL6. Forms heterodimers composed of LIFR and IL6ST (type I OSM receptor) which are activated by LIF and OSM. Also forms heterodimers composed of OSMR and IL6ST (type II receptor) which are activated by OSM but not by LIF. Component of a receptor complex composed of IL6ST/GP130, IL27RA/WSX1 and CNTFR which interacts with the neuroprotective peptide humanin. Interacts with HCK. Interacts with INPP5D/SHIP1. Interacts with SRC and YES. Interacts with ARMH4; this interaction prevents IL6ST protein homodimerization and bridges ARMH4 with IL6R and STAT3 and therefore inhibits phosphorylation of STAT3 at 'Tyr-705'. As to quaternary structure, (Microbial infection) The homodimer binds two molecules of herpes virus 8/HHV-8 protein vIL-6. Post-translationally, phosphorylation of Ser-782 down-regulates cell surface expression. In terms of processing, heavily N-glycosylated. Glycosylation is required for protein stability and localization in plasma membrane but not for ligand binding. Found in all the tissues and cell lines examined. Expression not restricted to IL6 responsive cells. In terms of tissue distribution, expressed in blood serum (at protein level).

It is found in the cell membrane. Its subcellular location is the secreted. In terms of biological role, signal-transducing molecule. The receptor systems for IL6, LIF, OSM, CNTF, IL11, CTF1 and BSF3 can utilize IL6ST for initiating signal transmission. Binding of IL6 to IL6R induces IL6ST homodimerization and formation of a high-affinity receptor complex, which activates the intracellular JAK-MAPK and JAK-STAT3 signaling pathways. That causes phosphorylation of IL6ST tyrosine residues which in turn activates STAT3. In parallel, the IL6 signaling pathway induces the expression of two cytokine receptor signaling inhibitors, SOCS1 and SOCS3, which inhibit JAK and terminate the activity of the IL6 signaling pathway as a negative feedback loop. Also activates the yes-associated protein 1 (YAP) and NOTCH pathways to control inflammation-induced epithelial regeneration, independently of STAT3. Acts as a receptor for the neuroprotective peptide humanin as part of a complex with IL27RA/WSX1 and CNTFR. Mediates signals which regulate immune response, hematopoiesis, pain control and bone metabolism. Has a role in embryonic development. Essential for survival of motor and sensory neurons and for differentiation of astrocytes. Required for expression of TRPA1 in nociceptive neurons. Required for the maintenance of PTH1R expression in the osteoblast lineage and for the stimulation of PTH-induced osteoblast differentiation. Required for normal trabecular bone mass and cortical bone composition. Functionally, binds to the soluble IL6:sIL6R complex (hyper-IL6), thereby blocking IL6 trans-signaling. Inhibits sIL6R-dependent acute phase response. Also blocks IL11 cluster signaling through IL11R. This is Interleukin-6 receptor subunit beta from Homo sapiens (Human).